A 342-amino-acid polypeptide reads, in one-letter code: Anthranilate phosphoribosyltransferase (342 aa).

Residues Gly-83, 86-87, Thr-91, 93-96, 111-119, and Ser-123 each bind 5-phospho-alpha-D-ribose 1-diphosphate; these read GD, NIST, and KHGGRSVSS. Gly-83 is a binding site for anthranilate. Residue Ser-95 participates in Mg(2+) binding. Arg-169 provides a ligand contact to anthranilate. Residues Asp-228 and Glu-229 each coordinate Mg(2+).

Belongs to the anthranilate phosphoribosyltransferase family. Homodimer. Mg(2+) serves as cofactor.

It catalyses the reaction N-(5-phospho-beta-D-ribosyl)anthranilate + diphosphate = 5-phospho-alpha-D-ribose 1-diphosphate + anthranilate. Its pathway is amino-acid biosynthesis; L-tryptophan biosynthesis; L-tryptophan from chorismate: step 2/5. Catalyzes the transfer of the phosphoribosyl group of 5-phosphorylribose-1-pyrophosphate (PRPP) to anthranilate to yield N-(5'-phosphoribosyl)-anthranilate (PRA). The chain is Anthranilate phosphoribosyltransferase from Chromobacterium violaceum (strain ATCC 12472 / DSM 30191 / JCM 1249 / CCUG 213 / NBRC 12614 / NCIMB 9131 / NCTC 9757 / MK).